We begin with the raw amino-acid sequence, 545 residues long: Chaperonin GroEL (545 aa).

Residues 30-33 (TLGP), Lys51, 87-91 (DGTTT), Gly415, 479-481 (NAA), and Asp495 each bind ATP. Positions 526 to 545 (KEDKPDLGNAGAGGNMGGMM) are disordered. Residues 535–545 (AGAGGNMGGMM) show a composition bias toward gly residues.

Belongs to the chaperonin (HSP60) family. Forms a cylinder of 14 subunits composed of two heptameric rings stacked back-to-back. Interacts with the co-chaperonin GroES.

Its subcellular location is the cytoplasm. The catalysed reaction is ATP + H2O + a folded polypeptide = ADP + phosphate + an unfolded polypeptide.. Its function is as follows. Together with its co-chaperonin GroES, plays an essential role in assisting protein folding. The GroEL-GroES system forms a nano-cage that allows encapsulation of the non-native substrate proteins and provides a physical environment optimized to promote and accelerate protein folding. The sequence is that of Chaperonin GroEL from Blochmanniella pennsylvanica (strain BPEN).